We begin with the raw amino-acid sequence, 1605 residues long: GTPase-activating protein pac-1 (1605 aa).

A required for localization to adherens junctions region spans residues 1 to 574 (MEEHHRRLHV…QRFIALFNSS (574 aa)). 3 disordered regions span residues 293–430 (QRHP…ISTS), 529–556 (MRSG…LNAP), and 574–593 (SKTS…RSRT). Positions 323–334 (SKEDPSEDTGHD) are enriched in basic and acidic residues. Composition is skewed to low complexity over residues 353-365 (RNAS…SSRS), 420-430 (TTSSTSSISTS), and 530-552 (RSGG…TSRS). One can recognise a PH domain in the interval 599–726 (RFALPGTILQ…WISVLQSSSE (128 aa)). Polar residues-rich tracts occupy residues 728–745 (GIAT…TTGR) and 846–855 (KNSQLQSPTA). 2 disordered regions span residues 728-752 (GIAT…NAVS) and 846-942 (KNSQ…AGAP). The span at 868 to 879 (SSSQTMATTSSS) shows a compositional bias: low complexity. Positions 908–917 (SGRKWKKSKA) are enriched in basic residues. Low complexity predominate over residues 928–941 (GSSSGSQQQGAAGA). Residues 948–1146 (VRIADCPTGS…TLIHYNLWMF (199 aa)) enclose the Rho-GAP domain. Disordered regions lie at residues 1152–1176 (TEDA…YGVG), 1207–1258 (EGKG…AASV), 1277–1339 (SRQT…RRKR), 1438–1533 (TSDY…ARRH), and 1554–1605 (GIRK…DELL). The span at 1211–1229 (QKIKNMLRRNSRRDKSKSK) shows a compositional bias: basic residues. Composition is skewed to polar residues over residues 1244-1257 (GWTQ…SAAS) and 1278-1300 (RQTV…RLDQ). The span at 1301 to 1312 (SPSLESSLGSLP) shows a compositional bias: low complexity. Polar residues predominate over residues 1438–1453 (TSDYSTTSSAPLSTNP). Residues 1461-1476 (DQPNSSSDYASSDPSP) are compositionally biased toward low complexity. Polar residues-rich tracts occupy residues 1480-1493 (NPST…SNLA) and 1500-1515 (HATS…MSRS). Residues 1558 to 1575 (SSPDVSRDEVSDDEKNHQ) are compositionally biased toward basic and acidic residues.

Associated with the catenin-cadherin complex consisting of hmr-1, hmp-1 and hmp-2; this is mediated by interaction with picc-1.

It is found in the cytoplasm. It localises to the cell junction. Its subcellular location is the adherens junction. Its function is as follows. GTPase-activating protein for members of the Rho subfamily including Rac1, RhoA and cdc42 and other Ras-related subfamilies including let-60. Mediates radial (inner-outer) polarity and gastrulation by excluding par-6 from contacted cell surfaces; acts by inactivating cdc42 at inner cell surfaces which limits active cdc42 to outer cell surfaces devoid of cell-cell contacts, where cdc42 can bind and recruit par-6. Required for blastomere polarization. This chain is GTPase-activating protein pac-1 (pac-1), found in Caenorhabditis elegans.